Reading from the N-terminus, the 204-residue chain is Urease accessory protein UreG 1 (204 aa).

14–21 serves as a coordination point for GTP; it reads GPVGSGKT.

It belongs to the SIMIBI class G3E GTPase family. UreG subfamily. As to quaternary structure, homodimer. UreD, UreF and UreG form a complex that acts as a GTP-hydrolysis-dependent molecular chaperone, activating the urease apoprotein by helping to assemble the nickel containing metallocenter of UreC. The UreE protein probably delivers the nickel.

The protein localises to the cytoplasm. Facilitates the functional incorporation of the urease nickel metallocenter. This process requires GTP hydrolysis, probably effectuated by UreG. The polypeptide is Urease accessory protein UreG 1 (Methylorubrum populi (strain ATCC BAA-705 / NCIMB 13946 / BJ001) (Methylobacterium populi)).